The primary structure comprises 417 residues: Gamma-glutamyl phosphate reductase (417 aa).

The protein belongs to the gamma-glutamyl phosphate reductase family.

The protein resides in the cytoplasm. The enzyme catalyses L-glutamate 5-semialdehyde + phosphate + NADP(+) = L-glutamyl 5-phosphate + NADPH + H(+). The protein operates within amino-acid biosynthesis; L-proline biosynthesis; L-glutamate 5-semialdehyde from L-glutamate: step 2/2. Its function is as follows. Catalyzes the NADPH-dependent reduction of L-glutamate 5-phosphate into L-glutamate 5-semialdehyde and phosphate. The product spontaneously undergoes cyclization to form 1-pyrroline-5-carboxylate. This is Gamma-glutamyl phosphate reductase from Desulfitobacterium hafniense (strain Y51).